Here is a 486-residue protein sequence, read N- to C-terminus: Shutoff alkaline exonuclease (486 aa).

It belongs to the herpesviridae alkaline nuclease family. As to quaternary structure, forms a complex with the DNA polymerase, the DNA polymerase processivity factor, and the major DNA binding protein.

The protein localises to the host nucleus. Its subcellular location is the host cytoplasm. Plays a role in processing non linear or branched viral DNA intermediates in order to promote the production of mature packaged unit-length linear progeny viral DNA molecules. Exhibits endonuclease and exonuclease activities and accepts both double-stranded and single-stranded DNA as substrate. Exonuclease digestion of DNA is in the 5'-&gt; 3' direction and the products are 5'-monophosphate nucleosides. Additionally, forms a recombinase with the major DNA-binding protein, which displays strand exchange activity. Also acts as a cytoplasmic RNA endonuclease that induces degradation of the majority of the cellular messenger RNAs during early lytic infection. The resulting inhibition of cellular protein synthesis serves to ensure maximal viral gene expression and evasion from host immune response. Internally cleaves host mRNAs which are then degraded by the cellular exonuclease XRN1. Bypasses therefore the regulatory steps of deadenylation and decapping normally required for XRN1 activation. In addition, inhibits host inflammasome activation to promote viral lytic replication by interacting with host AIM2 and disrupting its polymerization. In Human herpesvirus 8 type P (isolate GK18) (HHV-8), this protein is Shutoff alkaline exonuclease (ORF37).